Consider the following 419-residue polypeptide: Tryptophan synthase beta chain (419 aa).

Lys-113 carries the N6-(pyridoxal phosphate)lysine modification.

The protein belongs to the TrpB family. In terms of assembly, tetramer of two alpha and two beta chains. It depends on pyridoxal 5'-phosphate as a cofactor.

It carries out the reaction (1S,2R)-1-C-(indol-3-yl)glycerol 3-phosphate + L-serine = D-glyceraldehyde 3-phosphate + L-tryptophan + H2O. Its pathway is amino-acid biosynthesis; L-tryptophan biosynthesis; L-tryptophan from chorismate: step 5/5. In terms of biological role, the beta subunit is responsible for the synthesis of L-tryptophan from indole and L-serine. The chain is Tryptophan synthase beta chain from Picrophilus torridus (strain ATCC 700027 / DSM 9790 / JCM 10055 / NBRC 100828 / KAW 2/3).